The following is a 424-amino-acid chain: UDP-N-acetylglucosamine 1-carboxyvinyltransferase (424 aa).

22–23 (KN) provides a ligand contact to phosphoenolpyruvate. R96 provides a ligand contact to UDP-N-acetyl-alpha-D-glucosamine. C120 serves as the catalytic Proton donor. C120 is modified (2-(S-cysteinyl)pyruvic acid O-phosphothioketal). UDP-N-acetyl-alpha-D-glucosamine is bound by residues 125–129 (RPVDQ), D312, and I334.

Belongs to the EPSP synthase family. MurA subfamily.

Its subcellular location is the cytoplasm. The enzyme catalyses phosphoenolpyruvate + UDP-N-acetyl-alpha-D-glucosamine = UDP-N-acetyl-3-O-(1-carboxyvinyl)-alpha-D-glucosamine + phosphate. The protein operates within cell wall biogenesis; peptidoglycan biosynthesis. Its function is as follows. Cell wall formation. Adds enolpyruvyl to UDP-N-acetylglucosamine. In Polynucleobacter necessarius subsp. necessarius (strain STIR1), this protein is UDP-N-acetylglucosamine 1-carboxyvinyltransferase.